A 198-amino-acid polypeptide reads, in one-letter code: 3-isopropylmalate dehydratase small subunit (198 aa).

The protein belongs to the LeuD family. LeuD type 1 subfamily. In terms of assembly, heterodimer of LeuC and LeuD.

It catalyses the reaction (2R,3S)-3-isopropylmalate = (2S)-2-isopropylmalate. It functions in the pathway amino-acid biosynthesis; L-leucine biosynthesis; L-leucine from 3-methyl-2-oxobutanoate: step 2/4. Functionally, catalyzes the isomerization between 2-isopropylmalate and 3-isopropylmalate, via the formation of 2-isopropylmaleate. The chain is 3-isopropylmalate dehydratase small subunit from Mycobacterium leprae (strain Br4923).